We begin with the raw amino-acid sequence, 490 residues long: Dual specificity protein kinase CLK3 (490 aa).

The segment at 1-138 is disordered; that stretch reads MHHCKRYRSP…SKRSSRSVED (138 aa). Tyrosine 7 is modified (phosphotyrosine). Serine 9, serine 49, serine 51, serine 67, serine 76, and serine 78 each carry phosphoserine. Basic and acidic residues-rich tracts occupy residues 26–56 and 63–76; these read YSRE…DRIP and EHRD…EERS. Residues 88 to 116 show a composition bias toward basic residues; the sequence is RSRHRRRSRERAPYRTRKHAHHCHKRRTR. Positions 117–130 are enriched in low complexity; it reads SCSSASSRSQQSSK. The residue at position 135 (serine 135) is a Phosphoserine. The region spanning 156–472 is the Protein kinase domain; sequence YEIVGNLGEG…LAEALLHPFF (317 aa). Residues 162 to 170 and lysine 186 each bind ATP; that span reads LGEGTFGKV. Aspartate 283 (proton acceptor) is an active-site residue.

This sequence belongs to the protein kinase superfamily. CMGC Ser/Thr protein kinase family. Lammer subfamily. In terms of processing, autophosphorylates on all three types of residues. In terms of tissue distribution, present at high levels in testis and ovary. In testis, expression is restricted to elongated, maturing spermatozoa. Also present in spleen, brain, lung and liver (at protein level).

The protein resides in the nucleus. Its subcellular location is the cytoplasm. It localises to the cytoplasmic vesicle. The protein localises to the secretory vesicle. It is found in the acrosome. It carries out the reaction L-seryl-[protein] + ATP = O-phospho-L-seryl-[protein] + ADP + H(+). The catalysed reaction is L-threonyl-[protein] + ATP = O-phospho-L-threonyl-[protein] + ADP + H(+). It catalyses the reaction L-tyrosyl-[protein] + ATP = O-phospho-L-tyrosyl-[protein] + ADP + H(+). Its activity is regulated as follows. Leucettine L41 inhibits its kinase activity and affects the regulation of alternative splicing mediated by phosphorylation of SR proteins. In terms of biological role, dual specificity kinase acting on both serine/threonine and tyrosine-containing substrates. Phosphorylates serine- and arginine-rich (SR) proteins of the spliceosomal complex. May be a constituent of a network of regulatory mechanisms that enable SR proteins to control RNA splicing and can cause redistribution of SR proteins from speckles to a diffuse nucleoplasmic distribution. Phosphorylates SRSF1 and SRSF3. Regulates the alternative splicing of tissue factor (F3) pre-mRNA in endothelial cells. The polypeptide is Dual specificity protein kinase CLK3 (Mus musculus (Mouse)).